The chain runs to 196 residues: MEIMKKPKIKSIPYEDFIDNESLEKMVKELNEGGANVFVGVLDDLINWGRSNSLWPLTFATSCCGIEFMALGAARYDMARFGFEVARASPRQADMIMVCGTITNKMAPVLKRLYDQMADPKYVIAVGGCAVSGGPFRKSYHVVNGVDKILPVDVYIPGCPPRPEAFYYGMMQLQRKVKIEKFFGGVNRKEKKPEGK.

Residues cysteine 63, cysteine 64, cysteine 129, and cysteine 159 each contribute to the [4Fe-4S] cluster site.

This sequence belongs to the complex I 20 kDa subunit family. In terms of assembly, NDH-1 is composed of 14 different subunits. Subunits NuoB, C, D, E, F, and G constitute the peripheral sector of the complex. [4Fe-4S] cluster serves as cofactor.

It localises to the cell inner membrane. It catalyses the reaction a quinone + NADH + 5 H(+)(in) = a quinol + NAD(+) + 4 H(+)(out). Its function is as follows. NDH-1 shuttles electrons from NADH, via FMN and iron-sulfur (Fe-S) centers, to quinones in the respiratory chain. The immediate electron acceptor for the enzyme in this species is believed to be a menaquinone. Couples the redox reaction to proton translocation (for every two electrons transferred, four hydrogen ions are translocated across the cytoplasmic membrane), and thus conserves the redox energy in a proton gradient. This Bacteroides fragilis (strain ATCC 25285 / DSM 2151 / CCUG 4856 / JCM 11019 / LMG 10263 / NCTC 9343 / Onslow / VPI 2553 / EN-2) protein is NADH-quinone oxidoreductase subunit B.